Reading from the N-terminus, the 112-residue chain is cAMP-regulated phosphoprotein 19 (112 aa).

Residues 1–11 are compositionally biased toward low complexity; sequence MSAESPEPASA. Positions 1–48 are disordered; the sequence is MSAESPEPASAEEQKEMEDKVISPEKAEEAKLKARYPHLGQKPGGSDF. Ser2 is subject to N-acetylserine. Over residues 12–32 the composition is skewed to basic and acidic residues; it reads EEQKEMEDKVISPEKAEEAKL. Phosphoserine; by GWL occurs at positions 62 and 104. The disordered stretch occupies residues 73–112; that stretch reads KNKQLPTAAPDKTEVTGDHIPTPQDLPQRKPSLVASKLAG. Ser104 bears the Phosphoserine; by PKA mark.

This sequence belongs to the endosulfine family. In terms of assembly, interacts (when phosphorylated at Ser-62) with PPP2R2D. Post-translationally, phosphorylation at Ser-62 by MASTL/GWL during mitosis is essential for interaction with PPP2R2D (PR55-delta) and subsequent inactivation of PP2A.

The protein resides in the cytoplasm. Functionally, protein phosphatase inhibitor that specifically inhibits protein phosphatase 2A (PP2A) during mitosis. Inhibition of PP2A is enhanced when ARPP19 is phosphorylated. When phosphorylated at Ser-62 during mitosis, specifically interacts with PPP2R2D (PR55-delta) and inhibits its activity, leading to inactivation of PP2A, an essential condition to keep cyclin-B1-CDK1 activity high during M phase. In Gallus gallus (Chicken), this protein is cAMP-regulated phosphoprotein 19 (ARPP19).